Reading from the N-terminus, the 388-residue chain is Peptide chain release factor subunit 1 (388 aa).

Belongs to the eukaryotic release factor 1 family. Heterodimer of two subunits, one of which binds GTP.

The protein localises to the cytoplasm. Directs the termination of nascent peptide synthesis (translation) in response to the termination codons UAA, UAG and UGA. This chain is Peptide chain release factor subunit 1 (prf1), found in Pyrobaculum aerophilum (strain ATCC 51768 / DSM 7523 / JCM 9630 / CIP 104966 / NBRC 100827 / IM2).